The primary structure comprises 252 residues: Trans-aconitate 2-methyltransferase (252 aa).

It belongs to the methyltransferase superfamily. Tam family.

It localises to the cytoplasm. It carries out the reaction trans-aconitate + S-adenosyl-L-methionine = (E)-3-(methoxycarbonyl)pent-2-enedioate + S-adenosyl-L-homocysteine. Its function is as follows. Catalyzes the S-adenosylmethionine monomethyl esterification of trans-aconitate. This chain is Trans-aconitate 2-methyltransferase, found in Escherichia coli (strain UTI89 / UPEC).